Here is a 304-residue protein sequence, read N- to C-terminus: Glutaminase (304 aa).

Substrate-binding residues include Ser-61, Asn-113, Glu-158, Asn-165, Tyr-189, Tyr-240, and Val-258.

The protein belongs to the glutaminase family. As to quaternary structure, homotetramer.

It carries out the reaction L-glutamine + H2O = L-glutamate + NH4(+). The chain is Glutaminase from Fusobacterium nucleatum subsp. nucleatum (strain ATCC 25586 / DSM 15643 / BCRC 10681 / CIP 101130 / JCM 8532 / KCTC 2640 / LMG 13131 / VPI 4355).